We begin with the raw amino-acid sequence, 171 residues long: Lipoprotein signal peptidase (171 aa).

2 helical membrane passes run 67-87 and 88-108; these read YALL…LWRS and TSKL…GNAY. Residues aspartate 118 and aspartate 136 contribute to the active site. A helical membrane pass occupies residues 127 to 147; it reads FSWYVFNLADAAIVAGVALLL.

The protein belongs to the peptidase A8 family.

The protein localises to the cell inner membrane. It carries out the reaction Release of signal peptides from bacterial membrane prolipoproteins. Hydrolyzes -Xaa-Yaa-Zaa-|-(S,diacylglyceryl)Cys-, in which Xaa is hydrophobic (preferably Leu), and Yaa (Ala or Ser) and Zaa (Gly or Ala) have small, neutral side chains.. It functions in the pathway protein modification; lipoprotein biosynthesis (signal peptide cleavage). Functionally, this protein specifically catalyzes the removal of signal peptides from prolipoproteins. The chain is Lipoprotein signal peptidase from Methylocella silvestris (strain DSM 15510 / CIP 108128 / LMG 27833 / NCIMB 13906 / BL2).